Here is a 401-residue protein sequence, read N- to C-terminus: Multidrug resistance protein MdtH (401 aa).

The next 11 membrane-spanning stretches (helical) occupy residues 13 to 33 (YFLLLDNLLVVLGFFIVFPLI), 34 to 54 (SIRFVDQLGWAAVLVGLALGL), 99 to 116 (PWILWLACALSGLGGTLF), 139 to 159 (LLMMQDSAGAVIGALIGSWLL), 165 to 185 (FVCWTGAVIFILAAGWNVWLL), 214 to 234 (VLTLTGYYMLSVQVMLMLPIV), 243 to 263 (AAVKWMYAIEAALSLTLLYPI), 277 to 297 (LMFGLLIMTLSLFPVGLITHL), 299 to 319 (TLFMFICFFYMGSIIAEPARE), 340 to 360 (LGLALGGALGYTGGGWMYDTG), and 368 to 388 (LPWFLLGVIGLITLVGLYWQF).

This sequence belongs to the major facilitator superfamily. DHA1 family. MdtH (TC 2.A.1.2.21) subfamily.

It is found in the cell inner membrane. In Yersinia enterocolitica serotype O:8 / biotype 1B (strain NCTC 13174 / 8081), this protein is Multidrug resistance protein MdtH.